Consider the following 146-residue polypeptide: Hemoglobin subunit delta (146 aa).

A Globin domain is found at 2–146; sequence HLTGDEKSAV…VATALAHKYH (145 aa). At Ser50 the chain carries Phosphoserine. Residues His63 and His92 each coordinate heme b.

Belongs to the globin family. In terms of assembly, heterotetramer of two delta chains and two alpha chains. As to expression, red blood cells.

This Saimiri sciureus (Common squirrel monkey) protein is Hemoglobin subunit delta (HBD).